The chain runs to 470 residues: 3-isopropylmalate dehydratase large subunit (470 aa).

3 residues coordinate [4Fe-4S] cluster: C349, C409, and C412.

This sequence belongs to the aconitase/IPM isomerase family. LeuC type 1 subfamily. As to quaternary structure, heterodimer of LeuC and LeuD. [4Fe-4S] cluster serves as cofactor.

The enzyme catalyses (2R,3S)-3-isopropylmalate = (2S)-2-isopropylmalate. The protein operates within amino-acid biosynthesis; L-leucine biosynthesis; L-leucine from 3-methyl-2-oxobutanoate: step 2/4. Functionally, catalyzes the isomerization between 2-isopropylmalate and 3-isopropylmalate, via the formation of 2-isopropylmaleate. The chain is 3-isopropylmalate dehydratase large subunit from Koribacter versatilis (strain Ellin345).